Reading from the N-terminus, the 322-residue chain is MFKIRKRSVPKETLKGILRKSPSKTSKVSQKVGFVDDHGKPIAEYRDFPADEGDEASSSDSHYEKKAPLVINRSGDYQINRMKWVVYSVKNVKKQNDEPSEMRIMEENRLTENNISRAPLFGTFDALDSPNLTTDAIIRARTPVPIITSGSSPDIPQCVSPVQNTYQQIFENNTDTSDEVQDFSIPPPPYPSSFPAPTTPLLALMSQLKQRGIISGEQNNQPLDNVNPMPQQFDRRPSRWTQGSWKVDRICTYYINRPDKCTRGDNCRFKHDDVEREHRQKEIQSSRNQSWHHRTSSHKYSSENSDHRGYRRHRSRSPHARQ.

Residues 1 to 63 are disordered; the sequence is MFKIRKRSVP…DEASSSDSHY (63 aa). Residues 34 to 49 are compositionally biased toward basic and acidic residues; that stretch reads FVDDHGKPIAEYRDFP. A C3H1-type zinc finger spans residues 245-274; the sequence is WKVDRICTYYINRPDKCTRGDNCRFKHDDV. Residues 278–322 are disordered; sequence HRQKEIQSSRNQSWHHRTSSHKYSSENSDHRGYRRHRSRSPHARQ. Residues 309–322 are compositionally biased toward basic residues; the sequence is GYRRHRSRSPHARQ.

This is an uncharacterized protein from Caenorhabditis elegans.